The sequence spans 493 residues: UDP-N-acetylmuramate--L-alanine ligase (493 aa).

ATP is bound at residue 112–118 (GTHGKTT).

The protein belongs to the MurCDEF family.

It localises to the cytoplasm. The catalysed reaction is UDP-N-acetyl-alpha-D-muramate + L-alanine + ATP = UDP-N-acetyl-alpha-D-muramoyl-L-alanine + ADP + phosphate + H(+). Its pathway is cell wall biogenesis; peptidoglycan biosynthesis. Cell wall formation. This chain is UDP-N-acetylmuramate--L-alanine ligase, found in Nitrosospira multiformis (strain ATCC 25196 / NCIMB 11849 / C 71).